A 63-amino-acid chain; its full sequence is Large ribosomal subunit protein uL29 (63 aa).

It belongs to the universal ribosomal protein uL29 family.

In Enterobacter sp. (strain 638), this protein is Large ribosomal subunit protein uL29.